We begin with the raw amino-acid sequence, 544 residues long: Shootin-1 (544 aa).

Coiled-coil stretches lie at residues 17–100, 141–184, and 259–349; these read SNQV…LKRK, IVIT…EKHD, and EALQ…QVSN. Positions 343–544 are disordered; sequence KLQQVSNPPT…TTTICTEQLS (202 aa). Residues 352–371 show a composition bias toward pro residues; sequence TAAPAPPPPPPPPPPPPPPS. Residues 372 to 383 are compositionally biased toward low complexity; it reads SSSSNPLSSLLS. Residues 397–412 are compositionally biased toward basic and acidic residues; the sequence is LVEKDSSEKSPEKDVR. Over residues 469 to 479 the composition is skewed to pro residues; that stretch reads SSSPGPRPPSP. The stretch at 480–504 forms a coiled coil; the sequence is SEKSELEKALQRRREAVKSAKNNTN. The segment covering 481–497 has biased composition (basic and acidic residues); that stretch reads EKSELEKALQRRREAVK. The segment covering 499–544 has biased composition (polar residues); the sequence is AKNNTNPSSVVDLTQIKQTRSEPGQNTGDQETLRHTTTTICTEQLS.

It belongs to the shootin family.

It is found in the perikaryon. It localises to the cell projection. The protein resides in the axon. The protein localises to the growth cone. Its subcellular location is the cytoplasm. It is found in the cytoskeleton. It localises to the filopodium. The protein resides in the lamellipodium. Involved in the generation of internal asymmetric signals required for neuronal polarization and neurite outgrowth. The chain is Shootin-1 from Danio rerio (Zebrafish).